The chain runs to 506 residues: Nostrin (506 aa).

The F-BAR domain maps to 1 to 260; sequence MRDPLTDCSY…AISKVDVEKD (260 aa). S114 is subject to Phosphoserine. Coiled coils occupy residues 160–230 and 305–334; these read SLTQ…LNQY and KLGR…ASSS. Residues 292–372 form the REM-1 domain; sequence PMDKERRKSL…SYKLSSVLAD (81 aa). A disordered region spans residues 413–435; it reads KAESKAPAGGQNNPSSSPSGSTV. Positions 419–435 are enriched in low complexity; that stretch reads PAGGQNNPSSSPSGSTV. In terms of domain architecture, SH3 spans 438–497; the sequence is ASKHLCKALYTFQARQDDELNLEKGDIVTVHEKKEEGWWFGSLKGKRGHFPAAYVEELPP. A Phosphoserine modification is found at S479.

Homotrimer. Interacts with NOS3, DNM2, WASL and CAV1. Interacts with DAB2. Interacts (via SH3 domain) with DNM2; this interaction allows the recruitment of NOS3 to dynamin-positive structures.

It localises to the cell membrane. The protein resides in the cytoplasmic vesicle. It is found in the cytoplasm. Its subcellular location is the cytoskeleton. The protein localises to the nucleus. In terms of biological role, multivalent adapter protein which may decrease NOS3 activity by inducing its translocation away from the plasma membrane. This is Nostrin from Mus musculus (Mouse).